Consider the following 241-residue polypeptide: Glutamate/aspartate import ATP-binding protein GltL (241 aa).

The ABC transporter domain occupies 2 to 236 (ITLKNVSKWY…PKSDRAKDFL (235 aa)). Position 34–41 (34–41 (GPSGSGKS)) interacts with ATP.

It belongs to the ABC transporter superfamily. As to quaternary structure, the complex is composed of two ATP-binding proteins (GltL), two transmembrane proteins (GltJ and GltK) and a solute-binding protein (GltI).

The protein localises to the cell inner membrane. The catalysed reaction is a polar amino acid(out) + ATP + H2O = a polar amino acid(in) + ADP + phosphate + H(+). The enzyme catalyses L-glutamate(out) + ATP + H2O = L-glutamate(in) + ADP + phosphate + H(+). It catalyses the reaction L-aspartate(out) + ATP + H2O = L-aspartate(in) + ADP + phosphate + H(+). Part of the ABC transporter complex GltIJKL involved in glutamate and aspartate uptake. Probably responsible for energy coupling to the transport system. This Escherichia coli O157:H7 protein is Glutamate/aspartate import ATP-binding protein GltL (gltL).